The chain runs to 114 residues: uncharacterized protein (114 aa).

A lipid anchor (N-myristoyl glycine; by host) is attached at G2. A run of 2 helical transmembrane segments spans residues F11–L31 and G44–I64. Residues V73–S114 form a disordered region. Residues K75–I92 show a composition bias toward basic and acidic residues. Residues S96 to S114 are compositionally biased toward polar residues.

The protein localises to the membrane. This is an uncharacterized protein from Acanthamoeba polyphaga (Amoeba).